Consider the following 57-residue polypeptide: LKCYQHGKVVTCHRDMKFCYHNIGMPFRNLKLILQGCSSSCSETENNKCCSTDRCNK.

4 disulfide bridges follow: C3-C19, C12-C37, C41-C49, and C50-C55.

This sequence belongs to the three-finger toxin family. Short-chain subfamily. Mambalgin sub-subfamily. As to expression, expressed by the venom gland.

The protein localises to the secreted. Its function is as follows. This three-finger toxin inhibits ASIC channels. It acts as a gating modifier toxin by decreasing the apparent proton sensitivity of activation and by slightly increasing the apparent proton sensitivity for inactivation. It binds more tightly to the closed state and to a much lesser extent the inactivated/desensitized state of ASIC1a. It interacts directly with the outside surface of the thumb domain of chicken ASIC1a (ASIC1a), but does not insert into the acidic pocket as suggested previously. This binding leads to relocation of the thumb domain that could disrupt the acidic pocket of cASIC1a. The peptide exerts both stimulatory and inhibitory effects on ASIC1a. It reversibly inhibits rASIC1a (IC(50)=17 nM), rASIC1b (IC(50)= 44 nM) and rASIC1a-rASIC2a (IC(50)=252 nM) channels. In vivo, it shows a potent naloxone-resistant analgesic effect against acute and inflammatory pain upon central and peripheral injection. In addition, it also has an opioid-independent effect on both thermal and mechanical inflammatory pain after systemic administration and is effective against neuropathic pain. The polypeptide is Mambalgin-3 (Dendroaspis angusticeps (Eastern green mamba)).